The chain runs to 325 residues: 6-hydroxymellein 5-farnesyltransferase cdmH (325 aa).

The next 5 membrane-spanning stretches (helical) occupy residues 60–80 (ASIL…GAAG), 113–133 (AFTW…AMLG), 138–158 (WPFM…KRPI), 169–189 (LLGI…YGPC), and 192–212 (ISEI…WSFY). N-linked (GlcNAc...) asparagine glycosylation is present at Asn214. The next 3 helical transmembrane spans lie at 243 to 263 (ALLA…LRPF), 267 to 287 (WLWL…LLSF), and 295 to 315 (GGVL…ACTL).

Belongs to the UbiA prenyltransferase family. Requires Mg(2+) as cofactor.

It is found in the membrane. The enzyme catalyses 6-hydroxymellein + (2E,6E)-farnesyl diphosphate = verruculide C + diphosphate. It participates in secondary metabolite biosynthesis; terpenoid biosynthesis. Functionally, 6-hydroxymellein 5-farnesyltransferase; part of the gene cluster that mediates the biosynthesis of chrodrimanin B, a meroterpenoid that acts as a potent blocker of insect GABA-gated chloride channels. The first step of the pathway is the biosynthesis of 6-hydroxymellein by the polyketide synthase cdmE. The prenyltransferase cdmH acts as a 6-hydroxymellein 5-farnesyltransferase and produces the hydrophobic metabolite verruculide C. The FAD-dependent monooxygenase cdmI further converts verruculide C into verruculide B. The terpene cyclase cdmG then produced the pentacyclic molecule 3-hydroxypentacecilide A, the backbone structure of chrodrimanin B, via folding the farnesyl moiety of the substrate into the chair-boat conformation. The short-chain dehydrogenase/reductase cdmF functions as the 3-OH dehydrogenase that oxidizes the C-3 hydroxyl group of 3-hydroxypentacecilide A and produces chrodrimanin C, the dehydrogenated product of 3-hydroxypentacecilide A. The cytochrome P450 monooxygenase cdmJ then accepts both 3-hydroxypentacecilide A and chrodrimanin C and functions as a C-7-beta-hydroxylase to produce respectively chrodrimanin H and chrodrimanin F. The dioxygenase cdmA accepts chrodrimanin H to afford chrodrimanin E, which is further transformed to chrodrimanin A by the dioxygenase cdmD. CdmA can also accept chrodrimanin C as substrate to convert it into verruculide A, which is further converted into chrodrimanin T by cdmD. The last step of the biosynthesis is proposed to be performed by the acetyltransferase cdmC which acetylates chrodrimanin A to yield chrodrimanin B. The pathway may also lead to the production of additional shunt products, including chrodrimanins T and U. This Talaromyces verruculosus (Penicillium verruculosum) protein is 6-hydroxymellein 5-farnesyltransferase cdmH.